A 255-amino-acid chain; its full sequence is tRNA (guanine-N(7)-)-methyltransferase (255 aa).

Residues 1–30 (MMHDDPNEAGLPPDDAALPDEAADGADEVN) are disordered. Residues 17–27 (ALPDEAADGAD) are compositionally biased toward acidic residues. Residues Glu-86, Glu-111, Asp-138, and Asp-161 each coordinate S-adenosyl-L-methionine. Asp-161 is a catalytic residue. Residues Lys-165, Asp-197, and 232 to 235 (TKFE) contribute to the substrate site.

Belongs to the class I-like SAM-binding methyltransferase superfamily. TrmB family.

It catalyses the reaction guanosine(46) in tRNA + S-adenosyl-L-methionine = N(7)-methylguanosine(46) in tRNA + S-adenosyl-L-homocysteine. It participates in tRNA modification; N(7)-methylguanine-tRNA biosynthesis. Catalyzes the formation of N(7)-methylguanine at position 46 (m7G46) in tRNA. This Burkholderia vietnamiensis (strain G4 / LMG 22486) (Burkholderia cepacia (strain R1808)) protein is tRNA (guanine-N(7)-)-methyltransferase.